The sequence spans 498 residues: 3-octaprenyl-4-hydroxybenzoate carboxy-lyase (498 aa).

Asparagine 177 contacts Mn(2+). Residues 180-182 (IYR), 194-196 (RWL), and 199-200 (RG) contribute to the prenylated FMN site. Glutamate 243 provides a ligand contact to Mn(2+). Catalysis depends on aspartate 292, which acts as the Proton donor.

Belongs to the UbiD family. As to quaternary structure, homohexamer. The cofactor is prenylated FMN. Mn(2+) serves as cofactor.

The protein localises to the cell membrane. It catalyses the reaction a 4-hydroxy-3-(all-trans-polyprenyl)benzoate + H(+) = a 2-(all-trans-polyprenyl)phenol + CO2. It participates in cofactor biosynthesis; ubiquinone biosynthesis. Its function is as follows. Catalyzes the decarboxylation of 3-octaprenyl-4-hydroxy benzoate to 2-octaprenylphenol, an intermediate step in ubiquinone biosynthesis. In Methylococcus capsulatus (strain ATCC 33009 / NCIMB 11132 / Bath), this protein is 3-octaprenyl-4-hydroxybenzoate carboxy-lyase.